The primary structure comprises 856 residues: Valine--tRNA ligase (856 aa).

Positions 47-57 match the 'HIGH' region motif; the sequence is PTASGVLHIGH. The 'KMSKS' region signature appears at 578-582; it reads KMSKS. Position 581 (lysine 581) interacts with ATP.

This sequence belongs to the class-I aminoacyl-tRNA synthetase family. ValS type 2 subfamily. In terms of assembly, monomer.

Its subcellular location is the cytoplasm. The enzyme catalyses tRNA(Val) + L-valine + ATP = L-valyl-tRNA(Val) + AMP + diphosphate. Its function is as follows. Catalyzes the attachment of valine to tRNA(Val). As ValRS can inadvertently accommodate and process structurally similar amino acids such as threonine, to avoid such errors, it has a 'posttransfer' editing activity that hydrolyzes mischarged Thr-tRNA(Val) in a tRNA-dependent manner. This Tropheryma whipplei (strain Twist) (Whipple's bacillus) protein is Valine--tRNA ligase.